The chain runs to 276 residues: Capsid protein (276 aa).

The interval 1 to 85 (MAGKKNNNNG…PIVPKFSNRG (85 aa)) is r domain, interaction with RNA. The segment at 86 to 266 (DSTIVRNTEI…DLFIKYVIEF (181 aa)) is s domain, virion shell. The tract at residues 267–276 (IEPINPTMNV) is p domain, projecting.

The protein belongs to the icosahedral plant coat protein family. Homomultimer.

It localises to the virion. Capsid protein self-assembles to form an icosahedral capsid with a T=3 symmetry, about 28 nm in diameter, and consisting of 180 capsid proteins. This chain is Capsid protein, found in Tobacco necrosis virus (strain A) (TNV-A).